Consider the following 427-residue polypeptide: Serine--tRNA ligase (427 aa).

Position 235–237 (Thr-235–Glu-237) interacts with L-serine. Arg-266–Glu-268 contacts ATP. Position 289 (Glu-289) interacts with L-serine. Residue Glu-353–Ser-356 participates in ATP binding. Ser-388 lines the L-serine pocket.

Belongs to the class-II aminoacyl-tRNA synthetase family. Type-1 seryl-tRNA synthetase subfamily. As to quaternary structure, homodimer. The tRNA molecule binds across the dimer.

The protein resides in the cytoplasm. The catalysed reaction is tRNA(Ser) + L-serine + ATP = L-seryl-tRNA(Ser) + AMP + diphosphate + H(+). The enzyme catalyses tRNA(Sec) + L-serine + ATP = L-seryl-tRNA(Sec) + AMP + diphosphate + H(+). It functions in the pathway aminoacyl-tRNA biosynthesis; selenocysteinyl-tRNA(Sec) biosynthesis; L-seryl-tRNA(Sec) from L-serine and tRNA(Sec): step 1/1. Its function is as follows. Catalyzes the attachment of serine to tRNA(Ser). Is also able to aminoacylate tRNA(Sec) with serine, to form the misacylated tRNA L-seryl-tRNA(Sec), which will be further converted into selenocysteinyl-tRNA(Sec). This is Serine--tRNA ligase from Chromobacterium violaceum (strain ATCC 12472 / DSM 30191 / JCM 1249 / CCUG 213 / NBRC 12614 / NCIMB 9131 / NCTC 9757 / MK).